The following is a 511-amino-acid chain: Fusicocca-1,10(14)-diene-8beta,16-diol C-9 hydroxylase (511 aa).

Residues 7-29 (TVAALAAVFVAGTLLSRLASWIR) form a helical membrane-spanning segment. 3 N-linked (GlcNAc...) asparagine glycosylation sites follow: Asn64, Asn163, and Asn343. Cys450 is a binding site for heme.

This sequence belongs to the cytochrome P450 family. Heme serves as cofactor.

The protein localises to the membrane. Its pathway is mycotoxin biosynthesis. In terms of biological role, cytochrome P450 monooxygenase; part of the 2 gene clusters that mediate the biosynthesis of fusicoccins, diterpene glucosides that display phytohormone-like activity and function as potent activators of plasma membrane H(+)-ATPases in plants by modifying 14-3-3 proteins and cause the plant disease constriction canker. The first step in the pathway is performed by the fusicoccadiene synthase PaFS that possesses both prenyl transferase and terpene cyclase activity, converting isopentenyl diphosphate and dimethylallyl diphosphate into geranylgeranyl diphosphate (GGDP) and successively converting GGDP into fusicocca-2,10(14)-diene, a precursor for fusicoccin H. The second step is the oxidation at the C-8 position by the cytochrome P450 monooxygenase PaP450-2 to yield fusicocca-2,10(14)-diene-8-beta-ol. The cytochrome P450 monooxygenase PaP450-1 then catalyzes the hydroxylation at the C-16 position to produce fusicocca-2,10(14)-diene-8-beta,16-diol. The dioxygenase fc-dox then catalyzes the 16-oxydation of fusicocca-2,10(14)-diene-8-beta,16-diol to yield an aldehyde (8-beta-hydroxyfusicocca-1,10(14)-dien-16-al). The short-chain dehydrogenase/reductase fc-sdr catalyzes the reduction of the aldehyde to yield fusicocca-1,10(14)-diene-8-beta,16-diol. The next step is the hydroxylation at C-9 performed by the cytochrome P450 monooxygenase PaP450-3 that leads to fusicoccin H aglycon which is glycosylated to fusicoccin H by the O-glycosyltransferase PaGT. Hydroxylation at C-12 by the cytochrome P450 monooxygenase PaP450-4 leads then to the production of fusicoccin Q and is followed by methylation by the O-methyltransferase PaMT to yield fusicoccin P. Fusicoccin P is further converted to fusicoccin J via prenylation by the O-glucose prenyltransferase PaPT. Cytochrome P450 monooxygenase PaP450-5 then performs hydroxylation at C-19 to yield dideacetyl-fusicoccin A which is acetylated to 3'-O-deacetyl-fusicoccin A by the O-acetyltransferase PaAT-2. Finally, a another acetylation by the O-acetyltransferase PaAT-1 yields fusicoccin A. This is Fusicocca-1,10(14)-diene-8beta,16-diol C-9 hydroxylase from Phomopsis amygdali (Fusicoccum amygdali).